A 466-amino-acid chain; its full sequence is Cysteine--tRNA ligase (466 aa).

Cysteine 28 is a Zn(2+) binding site. Residues 30–40 (PTVYNYIHIGN) carry the 'HIGH' region motif. The Zn(2+) site is built by cysteine 208, histidine 233, and glutamate 237. The 'KMSKS' region signature appears at 265–269 (KMSKS). Lysine 268 contacts ATP.

The protein belongs to the class-I aminoacyl-tRNA synthetase family. Monomer. Zn(2+) serves as cofactor.

The protein localises to the cytoplasm. The catalysed reaction is tRNA(Cys) + L-cysteine + ATP = L-cysteinyl-tRNA(Cys) + AMP + diphosphate. This chain is Cysteine--tRNA ligase, found in Staphylococcus aureus (strain USA300).